Consider the following 293-residue polypeptide: Ribosomal protein L11 methyltransferase (293 aa).

4 residues coordinate S-adenosyl-L-methionine: Thr145, Gly166, Asp188, and Asn230.

This sequence belongs to the methyltransferase superfamily. PrmA family.

The protein localises to the cytoplasm. It catalyses the reaction L-lysyl-[protein] + 3 S-adenosyl-L-methionine = N(6),N(6),N(6)-trimethyl-L-lysyl-[protein] + 3 S-adenosyl-L-homocysteine + 3 H(+). Methylates ribosomal protein L11. This Shigella sonnei (strain Ss046) protein is Ribosomal protein L11 methyltransferase.